Reading from the N-terminus, the 590-residue chain is V-type ATP synthase alpha chain (590 aa).

234-241 lines the ATP pocket; that stretch reads GGFGAGKT.

This sequence belongs to the ATPase alpha/beta chains family.

The enzyme catalyses ATP + H2O + 4 H(+)(in) = ADP + phosphate + 5 H(+)(out). Functionally, produces ATP from ADP in the presence of a proton gradient across the membrane. The V-type alpha chain is a catalytic subunit. The chain is V-type ATP synthase alpha chain from Halothermothrix orenii (strain H 168 / OCM 544 / DSM 9562).